A 220-amino-acid chain; its full sequence is Phosphatidylserine decarboxylase proenzyme (220 aa).

The active-site Schiff-base intermediate with substrate; via pyruvic acid is the serine 189. Residue serine 189 is modified to Pyruvic acid (Ser); by autocatalysis.

The protein belongs to the phosphatidylserine decarboxylase family. PSD-A subfamily. As to quaternary structure, heterodimer of a large membrane-associated beta subunit and a small pyruvoyl-containing alpha subunit. Pyruvate serves as cofactor. Post-translationally, is synthesized initially as an inactive proenzyme. Formation of the active enzyme involves a self-maturation process in which the active site pyruvoyl group is generated from an internal serine residue via an autocatalytic post-translational modification. Two non-identical subunits are generated from the proenzyme in this reaction, and the pyruvate is formed at the N-terminus of the alpha chain, which is derived from the carboxyl end of the proenzyme. The post-translation cleavage follows an unusual pathway, termed non-hydrolytic serinolysis, in which the side chain hydroxyl group of the serine supplies its oxygen atom to form the C-terminus of the beta chain, while the remainder of the serine residue undergoes an oxidative deamination to produce ammonia and the pyruvoyl prosthetic group on the alpha chain.

The protein localises to the cell membrane. The enzyme catalyses a 1,2-diacyl-sn-glycero-3-phospho-L-serine + H(+) = a 1,2-diacyl-sn-glycero-3-phosphoethanolamine + CO2. The protein operates within phospholipid metabolism; phosphatidylethanolamine biosynthesis; phosphatidylethanolamine from CDP-diacylglycerol: step 2/2. Its function is as follows. Catalyzes the formation of phosphatidylethanolamine (PtdEtn) from phosphatidylserine (PtdSer). The polypeptide is Phosphatidylserine decarboxylase proenzyme (Pelobacter propionicus (strain DSM 2379 / NBRC 103807 / OttBd1)).